Here is a 666-residue protein sequence, read N- to C-terminus: UvrABC system protein B (666 aa).

The region spanning 25–412 is the Helicase ATP-binding domain; that stretch reads NGIKNNNKWQ…SENIAEQVIR (388 aa). Position 38 to 45 (38 to 45) interacts with ATP; it reads GVTGSGKT. Positions 91-114 match the Beta-hairpin motif; sequence YYDYYQPEAYVAQTDTYIEKDASI. Residues 429–595 enclose the Helicase C-terminal domain; the sequence is QIDDLYSEIK…TIKKAVRDVI (167 aa). Positions 622–657 constitute a UVR domain; sequence DKLIKEFEKEMKEAAKELQFEKAAYFRDKVNELKKK.

The protein belongs to the UvrB family. In terms of assembly, forms a heterotetramer with UvrA during the search for lesions. Interacts with UvrC in an incision complex.

It localises to the cytoplasm. In terms of biological role, the UvrABC repair system catalyzes the recognition and processing of DNA lesions. A damage recognition complex composed of 2 UvrA and 2 UvrB subunits scans DNA for abnormalities. Upon binding of the UvrA(2)B(2) complex to a putative damaged site, the DNA wraps around one UvrB monomer. DNA wrap is dependent on ATP binding by UvrB and probably causes local melting of the DNA helix, facilitating insertion of UvrB beta-hairpin between the DNA strands. Then UvrB probes one DNA strand for the presence of a lesion. If a lesion is found the UvrA subunits dissociate and the UvrB-DNA preincision complex is formed. This complex is subsequently bound by UvrC and the second UvrB is released. If no lesion is found, the DNA wraps around the other UvrB subunit that will check the other stand for damage. In Clostridium acetobutylicum (strain ATCC 824 / DSM 792 / JCM 1419 / IAM 19013 / LMG 5710 / NBRC 13948 / NRRL B-527 / VKM B-1787 / 2291 / W), this protein is UvrABC system protein B.